The primary structure comprises 485 residues: MFLTSVLILCSLAALSLGQKNNNFAPGRNTIVHLFEWHWDDIANECENFLGPKGFAGVQISPPAENTVIGDRPWWERYQPISYALNTRSGDESALASMIRRCNNAGVRIYVDAVFNHMSATSGIGTGGSSCDVEPSASPAVPYGSGDFHGRCTSNNYQDPNNIRNCWLSGLPDLDQSKDYVRDKILEYLNHLVDLGVAGFRVDAAKHMWPADLQVIYGRVKDLNTDHGFSQGSRPFFYQEVIDLGGEGVSKNEYTGFGTVLEFKYGTELGNAFQGNNALHNLENWGPAWGLLEGTDAVVFIDNHDNQRTGSGAILTYKNPRPYKMAIGFMLAHPYGTTRIMSSFSFDYNDQGPPTQGPGFNSVRNLHQWVGGANTGWRQILRVMVGFRNAVDGTSISNWWSDGNQQIAFGRGDKGFVAFTLAGDINGNLQTSLPAGSYCDIVSGKLENGSCTGKTVNVDGNGQAYITLSSGEDDGFLAIHVGAKV.

A signal peptide spans 1-18 (MFLTSVLILCSLAALSLG). Gln19 carries the post-translational modification Pyrrolidone carboxylic acid. An intrachain disulfide couples Cys46 to Cys102. The Ca(2+) site is built by Asn116, Arg164, and Asp173. Residues Cys152 and Cys166 are joined by a disulfide bond. Residue Arg201 participates in chloride binding. Asp203 acts as the Nucleophile in catalysis. A Ca(2+)-binding site is contributed by His207. The active-site Proton donor is Glu240. The chloride site is built by Asn303 and Arg339. Cys439 and Cys451 form a disulfide bridge. An N-linked (GlcNAc...) asparagine glycan is attached at Asn448.

The protein belongs to the glycosyl hydrolase 13 family. Monomer. Ca(2+) is required as a cofactor. Chloride serves as cofactor. Expressed in larval and adult gut.

It is found in the secreted. It catalyses the reaction Endohydrolysis of (1-&gt;4)-alpha-D-glucosidic linkages in polysaccharides containing three or more (1-&gt;4)-alpha-linked D-glucose units.. The sequence is that of Alpha-amylase from Phaedon cochleariae (Mustard beetle).